Here is a 108-residue protein sequence, read N- to C-terminus: UPF0145 protein Npun_F4817 (108 aa).

It belongs to the UPF0145 family.

In Nostoc punctiforme (strain ATCC 29133 / PCC 73102), this protein is UPF0145 protein Npun_F4817.